Here is a 123-residue protein sequence, read N- to C-terminus: Secreted RxLR effector protein RXLR-C21 (123 aa).

An N-terminal signal peptide occupies residues 1–23 (MRLHLLVLSVIVVSLLVSDNAHA). Positions 32 to 65 (RALRETPINGLVTNQLAVSRNLTPAKFITNSEER) match the RxLR-dEER motif. Residues 101-121 (VTTICSIVLFVMVFGCLYKIF) traverse the membrane as a helical segment.

Belongs to the RxLR effector family.

The protein resides in the secreted. The protein localises to the host endoplasmic reticulum membrane. Secreted effector that does not suppress pattern-triggered immunity (PTI) in plant host. The chain is Secreted RxLR effector protein RXLR-C21 from Plasmopara halstedii (Downy mildew of sunflower).